The chain runs to 154 residues: 6,7-dimethyl-8-ribityllumazine synthase (154 aa).

Residues Phe-24, 56–58 (SFE), and 80–82 (AVV) each bind 5-amino-6-(D-ribitylamino)uracil. 85–86 (ET) contacts (2S)-2-hydroxy-3-oxobutyl phosphate. His-88 acts as the Proton donor in catalysis. Phe-113 lines the 5-amino-6-(D-ribitylamino)uracil pocket. Arg-127 is a binding site for (2S)-2-hydroxy-3-oxobutyl phosphate.

The protein belongs to the DMRL synthase family.

It catalyses the reaction (2S)-2-hydroxy-3-oxobutyl phosphate + 5-amino-6-(D-ribitylamino)uracil = 6,7-dimethyl-8-(1-D-ribityl)lumazine + phosphate + 2 H2O + H(+). It functions in the pathway cofactor biosynthesis; riboflavin biosynthesis; riboflavin from 2-hydroxy-3-oxobutyl phosphate and 5-amino-6-(D-ribitylamino)uracil: step 1/2. Its function is as follows. Catalyzes the formation of 6,7-dimethyl-8-ribityllumazine by condensation of 5-amino-6-(D-ribitylamino)uracil with 3,4-dihydroxy-2-butanone 4-phosphate. This is the penultimate step in the biosynthesis of riboflavin. In Thermococcus gammatolerans (strain DSM 15229 / JCM 11827 / EJ3), this protein is 6,7-dimethyl-8-ribityllumazine synthase.